Here is a 201-residue protein sequence, read N- to C-terminus: Molybdenum cofactor guanylyltransferase (201 aa).

Residues 14-16 (LAG), Lys31, and Asp104 each bind GTP. Position 104 (Asp104) interacts with Mg(2+).

It belongs to the MobA family. As to quaternary structure, monomer. Mg(2+) serves as cofactor.

It is found in the cytoplasm. The catalysed reaction is Mo-molybdopterin + GTP + H(+) = Mo-molybdopterin guanine dinucleotide + diphosphate. Functionally, transfers a GMP moiety from GTP to Mo-molybdopterin (Mo-MPT) cofactor (Moco or molybdenum cofactor) to form Mo-molybdopterin guanine dinucleotide (Mo-MGD) cofactor. The chain is Molybdenum cofactor guanylyltransferase from Helicobacter pylori (strain P12).